Reading from the N-terminus, the 152-residue chain is Transcriptional regulator MraZ (152 aa).

SpoVT-AbrB domains follow at residues 5–52 (LNPI…THPQ) and 81–124 (ATEV…GKSQ).

The protein belongs to the MraZ family. Forms oligomers.

The protein resides in the cytoplasm. The protein localises to the nucleoid. The polypeptide is Transcriptional regulator MraZ (Coxiella burnetii (strain Dugway 5J108-111)).